Consider the following 182-residue polypeptide: MTFDQSNFKSLIRPVVDFPKPGVVFRDITPLFQSPKATRQVIDSFVQRYIDADFSHIGVMDARGFLIGSVVAYQLNKPLVLFRKQGKLPADVLSEAYQTEYGEAYLEVHADSLCEGNSVIMFDDLIATGGTLIAAANLIRRMGAQVHEAAAIIDLPELGGSKRLNDLNIPTFCLTEFALDEQ.

This sequence belongs to the purine/pyrimidine phosphoribosyltransferase family. As to quaternary structure, homodimer.

The protein localises to the cytoplasm. The catalysed reaction is AMP + diphosphate = 5-phospho-alpha-D-ribose 1-diphosphate + adenine. It functions in the pathway purine metabolism; AMP biosynthesis via salvage pathway; AMP from adenine: step 1/1. Its function is as follows. Catalyzes a salvage reaction resulting in the formation of AMP, that is energically less costly than de novo synthesis. The polypeptide is Adenine phosphoribosyltransferase (Pseudomonas syringae pv. tomato (strain ATCC BAA-871 / DC3000)).